A 297-amino-acid chain; its full sequence is uncharacterized protein (297 aa).

This sequence belongs to the glycosyltransferase 2 family.

This is an uncharacterized protein from Mycoplasma genitalium (strain ATCC 33530 / DSM 19775 / NCTC 10195 / G37) (Mycoplasmoides genitalium).